The following is a 353-amino-acid chain: Methionine import ATP-binding protein MetN (353 aa).

Residues 8 to 249 enclose the ABC transporter domain; sequence LDQIDVTFHQ…PKQPLTQDFI (242 aa). 42–49 contributes to the ATP binding site; the sequence is GYSGAGKS.

This sequence belongs to the ABC transporter superfamily. Methionine importer (TC 3.A.1.24) family. In terms of assembly, the complex is composed of two ATP-binding proteins (MetN), two transmembrane proteins (MetI) and a solute-binding protein (MetQ).

Its subcellular location is the cell membrane. The catalysed reaction is L-methionine(out) + ATP + H2O = L-methionine(in) + ADP + phosphate + H(+). The enzyme catalyses D-methionine(out) + ATP + H2O = D-methionine(in) + ADP + phosphate + H(+). Functionally, part of the ABC transporter complex MetNIQ involved in methionine import. Responsible for energy coupling to the transport system. This chain is Methionine import ATP-binding protein MetN, found in Streptococcus pneumoniae (strain ATCC BAA-255 / R6).